The primary structure comprises 181 residues: Shikimate kinase (181 aa).

23–28 (GTGKST) contacts ATP. Serine 27 is a binding site for Mg(2+). Substrate contacts are provided by aspartate 45, arginine 69, and glycine 91. Arginine 129 lines the ATP pocket. Arginine 148 serves as a coordination point for substrate.

Belongs to the shikimate kinase family. Monomer. The cofactor is Mg(2+).

The protein resides in the cytoplasm. The enzyme catalyses shikimate + ATP = 3-phosphoshikimate + ADP + H(+). It functions in the pathway metabolic intermediate biosynthesis; chorismate biosynthesis; chorismate from D-erythrose 4-phosphate and phosphoenolpyruvate: step 5/7. Catalyzes the specific phosphorylation of the 3-hydroxyl group of shikimic acid using ATP as a cosubstrate. This chain is Shikimate kinase, found in Geobacter sulfurreducens (strain ATCC 51573 / DSM 12127 / PCA).